A 395-amino-acid chain; its full sequence is Xylose isomerase (395 aa).

Catalysis depends on residues His-54 and Asp-57. 7 residues coordinate Mg(2+): Glu-181, Glu-217, His-220, Asp-245, Asp-255, Asp-257, and Asp-293.

This sequence belongs to the xylose isomerase family. As to quaternary structure, homotetramer. Mg(2+) serves as cofactor.

The protein resides in the cytoplasm. The enzyme catalyses alpha-D-xylose = alpha-D-xylulofuranose. This is Xylose isomerase from Pseudarthrobacter chlorophenolicus (strain ATCC 700700 / DSM 12829 / CIP 107037 / JCM 12360 / KCTC 9906 / NCIMB 13794 / A6) (Arthrobacter chlorophenolicus).